The sequence spans 143 residues: MTTMATQGAWLRMTSSAKSMTKSTVTSKELGFLTSQLSGLRISYTPSDVINRISLPSFPGIQPIVARRICPFTGKKANRANKVSFSNHKTKKLQFVNLQYKRVWWEAGKRFVKLRLSTKALKTIEKNGLDAVAKKAGIDLRKK.

The N-terminal 66 residues, 1–66 (MTTMATQGAW…SFPGIQPIVA (66 aa)), are a transit peptide targeting the chloroplast.

Belongs to the bacterial ribosomal protein bL28 family. Part of the 50S ribosomal subunit.

The protein resides in the plastid. It localises to the chloroplast. This is Large ribosomal subunit protein bL28c (RPL28) from Arabidopsis thaliana (Mouse-ear cress).